The following is a 303-amino-acid chain: UDP-3-O-acyl-N-acetylglucosamine deacetylase (303 aa).

Residues H78, H237, and D241 each contribute to the Zn(2+) site. H264 functions as the Proton donor in the catalytic mechanism.

This sequence belongs to the LpxC family. It depends on Zn(2+) as a cofactor.

The enzyme catalyses a UDP-3-O-[(3R)-3-hydroxyacyl]-N-acetyl-alpha-D-glucosamine + H2O = a UDP-3-O-[(3R)-3-hydroxyacyl]-alpha-D-glucosamine + acetate. It functions in the pathway glycolipid biosynthesis; lipid IV(A) biosynthesis; lipid IV(A) from (3R)-3-hydroxytetradecanoyl-[acyl-carrier-protein] and UDP-N-acetyl-alpha-D-glucosamine: step 2/6. Its function is as follows. Catalyzes the hydrolysis of UDP-3-O-myristoyl-N-acetylglucosamine to form UDP-3-O-myristoylglucosamine and acetate, the committed step in lipid A biosynthesis. This chain is UDP-3-O-acyl-N-acetylglucosamine deacetylase, found in Pseudomonas aeruginosa (strain LESB58).